The following is a 524-amino-acid chain: Cytochrome P450 monooxygenase alt1 (524 aa).

A helical membrane pass occupies residues 24-44 (IANMLSVIAFSICISPIVYFL). C469 contacts heme.

Belongs to the cytochrome P450 family. It depends on heme as a cofactor.

It localises to the membrane. The protein operates within secondary metabolite biosynthesis. Cytochrome P450 monooxygenase; part of the gene cluster that mediates the biosynthesis of alternapyrone derivatives. Alternapyrone is a decaketide with octa-methylation from methionine on every C2 unit except the third unit. All the domains in the polyketide synthase alt5 are apparently involved in alternapyrone synthesis, that is, the 8 CMeT, 7 KR, 7 DH, and 4 ER reactions in the 9 KS-mediated condensation steps required for alternapyrone synthesis. the alternapyrone produced by alt5 might be intensively modified by cytochrome P450 monooxygenases alt1, alt2 and alt3 and FAD-dependent oxidoreductase alt4 present in the alt gene cluster. The chain is Cytochrome P450 monooxygenase alt1 from Alternaria solani.